The following is a 319-amino-acid chain: Protease HtpX homolog (319 aa).

The next 2 membrane-spanning stretches (helical) occupy residues Leu-3–Leu-23 and Thr-32–Phe-52. Residue His-134 coordinates Zn(2+). Glu-135 is an active-site residue. A Zn(2+)-binding site is contributed by His-138. Transmembrane regions (helical) follow at residues Val-146–Trp-166 and Met-182–Val-202. Glu-210 contacts Zn(2+).

The protein belongs to the peptidase M48B family. The cofactor is Zn(2+).

The protein localises to the cell membrane. The polypeptide is Protease HtpX homolog (Aeropyrum pernix (strain ATCC 700893 / DSM 11879 / JCM 9820 / NBRC 100138 / K1)).